Consider the following 192-residue polypeptide: Xanthine phosphoribosyltransferase (192 aa).

Residues leucine 20 and asparagine 27 each contribute to the xanthine site. A 5-phospho-alpha-D-ribose 1-diphosphate-binding site is contributed by 128-132; it reads ANGDA. Lysine 156 contributes to the xanthine binding site.

The protein belongs to the purine/pyrimidine phosphoribosyltransferase family. Xpt subfamily. As to quaternary structure, homodimer.

The protein resides in the cytoplasm. It catalyses the reaction XMP + diphosphate = xanthine + 5-phospho-alpha-D-ribose 1-diphosphate. The protein operates within purine metabolism; XMP biosynthesis via salvage pathway; XMP from xanthine: step 1/1. Functionally, converts the preformed base xanthine, a product of nucleic acid breakdown, to xanthosine 5'-monophosphate (XMP), so it can be reused for RNA or DNA synthesis. The protein is Xanthine phosphoribosyltransferase of Staphylococcus aureus (strain Mu3 / ATCC 700698).